Reading from the N-terminus, the 133-residue chain is Phosphoribosyl-AMP cyclohydrolase (133 aa).

Asp-77 contacts Mg(2+). Zn(2+) is bound at residue Cys-78. Asp-79 and Asp-81 together coordinate Mg(2+). Zn(2+)-binding residues include Cys-95 and Cys-102.

The protein belongs to the PRA-CH family. In terms of assembly, homodimer. Requires Mg(2+) as cofactor. It depends on Zn(2+) as a cofactor.

It localises to the cytoplasm. It carries out the reaction 1-(5-phospho-beta-D-ribosyl)-5'-AMP + H2O = 1-(5-phospho-beta-D-ribosyl)-5-[(5-phospho-beta-D-ribosylamino)methylideneamino]imidazole-4-carboxamide. It participates in amino-acid biosynthesis; L-histidine biosynthesis; L-histidine from 5-phospho-alpha-D-ribose 1-diphosphate: step 3/9. Catalyzes the hydrolysis of the adenine ring of phosphoribosyl-AMP. This chain is Phosphoribosyl-AMP cyclohydrolase, found in Pseudomonas fluorescens (strain Pf0-1).